A 335-amino-acid polypeptide reads, in one-letter code: uncharacterized protein (335 aa).

2 disordered regions span residues 152–179 (IQLP…TVND) and 252–271 (LDLF…SASL). Serine 257 and serine 260 each carry phosphoserine. Polar residues predominate over residues 257 to 271 (SPSSENKSTAGSASL).

This is an uncharacterized protein from Schizosaccharomyces pombe (strain 972 / ATCC 24843) (Fission yeast).